The following is a 399-amino-acid chain: NADH-quinone oxidoreductase subunit D 2 (399 aa).

The disordered stretch occupies residues Met-1–Leu-20. Residues Ser-9 to Leu-20 are compositionally biased toward low complexity.

The protein belongs to the complex I 49 kDa subunit family. In terms of assembly, NDH-1 is composed of 14 different subunits. Subunits NuoB, C, D, E, F, and G constitute the peripheral sector of the complex.

It is found in the cell inner membrane. The enzyme catalyses a quinone + NADH + 5 H(+)(in) = a quinol + NAD(+) + 4 H(+)(out). NDH-1 shuttles electrons from NADH, via FMN and iron-sulfur (Fe-S) centers, to quinones in the respiratory chain. The immediate electron acceptor for the enzyme in this species is believed to be ubiquinone. Couples the redox reaction to proton translocation (for every two electrons transferred, four hydrogen ions are translocated across the cytoplasmic membrane), and thus conserves the redox energy in a proton gradient. This Opitutus terrae (strain DSM 11246 / JCM 15787 / PB90-1) protein is NADH-quinone oxidoreductase subunit D 2.